Here is a 533-residue protein sequence, read N- to C-terminus: Lymphocyte cytosolic protein 2 (533 aa).

Residues Val12 to Arg78 form the SAM domain. Residue Tyr23 is modified to Phosphotyrosine. 2 disordered regions span residues Arg78–His359 and Ser374–Asp419. A compositionally biased stretch (acidic residues) spans Glu94 to Asp144. A compositionally biased stretch (polar residues) spans Asn151–Met172. Pro residues predominate over residues Pro186–Pro201. Phosphoserine is present on residues Ser207 and Ser210. Positions Asn340–Thr354 are enriched in polar residues. 2 positions are modified to phosphoserine: Ser376 and Ser410. A compositionally biased stretch (pro residues) spans Leu400–Pro411. The region spanning Trp422 to Ala530 is the SH2 domain.

In terms of assembly, interacts with SLA. Interacts with CBLB. Interacts with GRB2. Interacts with SHB. Interacts with PRAM1. Interacts (via SH2 domain) with CD6 (via tyrosine phosphorylated C-terminus). Interacts with FYB1 and the phosphorylated form of FYB2. Interacts with 14-3-3 adapter/YWHAZ; this phosphorylation leads to YWHAZ proteolytic degradation. Interacts with VAV1; this interaction plays a role in TCR-mediated cytokine production. Interacts with AGER; this interaction plays an important role in AGER-mediated pro-inflammatory responses and cytokine release. In terms of processing, phosphorylated after T-cell receptor activation by ZAP70, ITK and TXK, which leads to the up-regulation of Th1 preferred cytokine IL-2. SYK-dependent phosphorylation is required for recruitment of PI3K signaling components. In terms of tissue distribution, highly expressed in spleen, thymus, and peripheral blood leukocytes.

The protein localises to the cytoplasm. Its function is as follows. Adapter protein primarily involved in signaling pathways within T-cells, as well as other immune cells such as platelets, mast cells, and natural killer (NK) cells. Plays a crucial role for transducing signal from the T-cell receptor (TCR) after antigen recognition leading to T-cell activation. Mechanistically, once phosphorylated by the kinase ZAP70, mediates interactions with the guanine-nucleotide exchange factor VAV1, the adapter protein NCK and the kinase ITK. In turn, stimulates the activation of PKC-theta/PRKCQ and NF-kappa-B transcriptional activity in response to CD3 and CD28 costimulation. Also plays an essential role in AGER-induced signaling pathways including p38 MAPK and ERK1/2 activation leading to cytokine release and pro-inflammatory responses. This is Lymphocyte cytosolic protein 2 (Lcp2) from Mus musculus (Mouse).